The primary structure comprises 351 residues: Protein IBD2 (351 aa).

A compositionally biased stretch (polar residues) spans 1 to 14; it reads MTPTNQSSGTTNAS. The disordered stretch occupies residues 1 to 20; it reads MTPTNQSSGTTNASVEVLSE. S100 and S106 each carry phosphoserine. Position 211 is a phosphothreonine (T211). Residues 223 to 249 are disordered; the sequence is LHGDGQHSISSRKHSRSKNSKKNGHVR. Over residues 232-249 the composition is skewed to basic residues; sequence SSRKHSRSKNSKKNGHVR.

Belongs to the IBD2 family. In terms of assembly, interacts with BFA1.

The protein resides in the cytoplasm. Its subcellular location is the cytoskeleton. It localises to the spindle pole. Functionally, part of a checkpoint which monitors spindle integrity and prevents premature exit from mitosis. This cell-cycle arrest depends upon inhibition of the G-protein TEM1 by the BFA1/BUB2 complex. In Saccharomyces cerevisiae (strain ATCC 204508 / S288c) (Baker's yeast), this protein is Protein IBD2 (IBD2).